The following is a 167-amino-acid chain: Leptin (167 aa).

Positions 1–21 (MHCVPLFCFLWFCHHLYYSQA) are cleaved as a signal peptide. Cysteines 117 and 167 form a disulfide.

Belongs to the leptin family.

The protein resides in the secreted. Functionally, key player in the regulation of energy balance and body weight control. Once released into the circulation, has central and peripheral effects by binding LEPR, found in many tissues, which results in the activation of several major signaling pathways. In the hypothalamus, acts as an appetite-regulating factor that induces a decrease in food intake and an increase in energy consumption by inducing anorexinogenic factors and suppressing orexigenic neuropeptides, also regulates bone mass and secretion of hypothalamo-pituitary-adrenal hormones. In the periphery, increases basal metabolism, influences reproductive function, regulates pancreatic beta-cell function and insulin secretion, is pro-angiogenic for endothelial cell and affects innate and adaptive immunity. In the arcuate nucleus of the hypothalamus, activates by depolarization POMC neurons inducing FOS and SOCS3 expression to release anorexigenic peptides and inhibits by hyperpolarization NPY neurons inducing SOCS3 with a consequent reduction on release of orexigenic peptides. In addition to its known satiety inducing effect, has a modulatory role in nutrient absorption. In the intestine, reduces glucose absorption by enterocytes by activating PKC and leading to a sequential activation of p38, PI3K and ERK signaling pathways which exerts an inhibitory effect on glucose absorption. Acts as a growth factor on certain tissues, through the activation of different signaling pathways increases expression of genes involved in cell cycle regulation such as CCND1, via JAK2-STAT3 pathway, or VEGFA, via MAPK1/3 and PI3K-AKT1 pathways. May also play an apoptotic role via JAK2-STAT3 pathway and up-regulation of BIRC5 expression. Pro-angiogenic, has mitogenic activity on vascular endothelial cells and plays a role in matrix remodeling by regulating the expression of matrix metalloproteinases (MMPs) and tissue inhibitors of metalloproteinases (TIMPs). In innate immunity, modulates the activity and function of neutrophils by increasing chemotaxis and the secretion of oxygen radicals. Increases phagocytosis by macrophages and enhances secretion of pro-inflammatory mediators. Increases cytotoxic ability of NK cells. Plays a pro-inflammatory role, in synergy with IL1B, by inducing NOS2 which promotes the production of IL6, IL8 and Prostaglandin E2, through a signaling pathway that involves JAK2, PI3K, MAP2K1/MEK1 and MAPK14/p38. In adaptive immunity, promotes the switch of memory T-cells towards T helper-1 cell immune responses. Increases CD4(+)CD25(-) T-cell proliferation and reduces autophagy during TCR (T-cell receptor) stimulation, through MTOR signaling pathway activation and BCL2 up-regulation. This chain is Leptin (LEP), found in Sminthopsis crassicaudata (Fat-tailed dunnart).